A 211-amino-acid polypeptide reads, in one-letter code: Transmembrane protein 247 (211 aa).

Composition is skewed to basic and acidic residues over residues 1 to 10 and 31 to 45; these read MAMEDREVME and PEGK…EVPK. The segment at 1 to 90 is disordered; it reads MAMEDREVME…AGDGPGLESV (90 aa). Over residues 63–73 the composition is skewed to pro residues; sequence PGPPRSLPPKS. Residues 119 to 148 are a coiled coil; the sequence is KYLHQENERQRQHEEVMEQLQQQQQQQQAL. 2 helical membrane-spanning segments follow: residues 159–179 and 186–206; these read LLLP…IHII and VFFL…LCLI.

The protein localises to the membrane. This chain is Transmembrane protein 247 (Tmem247), found in Mus musculus (Mouse).